The primary structure comprises 847 residues: Alanine--tRNA ligase (847 aa).

Zn(2+)-binding residues include histidine 554, histidine 558, cysteine 656, and histidine 660.

It belongs to the class-II aminoacyl-tRNA synthetase family. Zn(2+) is required as a cofactor.

The protein localises to the cytoplasm. The catalysed reaction is tRNA(Ala) + L-alanine + ATP = L-alanyl-tRNA(Ala) + AMP + diphosphate. Functionally, catalyzes the attachment of alanine to tRNA(Ala) in a two-step reaction: alanine is first activated by ATP to form Ala-AMP and then transferred to the acceptor end of tRNA(Ala). Also edits incorrectly charged Ser-tRNA(Ala) and Gly-tRNA(Ala) via its editing domain. This chain is Alanine--tRNA ligase, found in Helicobacter acinonychis (strain Sheeba).